Consider the following 235-residue polypeptide: 5'-methylthioadenosine/S-adenosylhomocysteine nucleosidase (235 aa).

Glu12 functions as the Proton acceptor in the catalytic mechanism. Substrate is bound by residues Gly78, Ile152, and 173-174 (ME). The active-site Proton donor is the Asp197.

This sequence belongs to the PNP/UDP phosphorylase family. MtnN subfamily. As to quaternary structure, homodimer.

The enzyme catalyses S-adenosyl-L-homocysteine + H2O = S-(5-deoxy-D-ribos-5-yl)-L-homocysteine + adenine. The catalysed reaction is S-methyl-5'-thioadenosine + H2O = 5-(methylsulfanyl)-D-ribose + adenine. It carries out the reaction 5'-deoxyadenosine + H2O = 5-deoxy-D-ribose + adenine. It participates in amino-acid biosynthesis; L-methionine biosynthesis via salvage pathway; S-methyl-5-thio-alpha-D-ribose 1-phosphate from S-methyl-5'-thioadenosine (hydrolase route): step 1/2. Functionally, catalyzes the irreversible cleavage of the glycosidic bond in both 5'-methylthioadenosine (MTA) and S-adenosylhomocysteine (SAH/AdoHcy) to adenine and the corresponding thioribose, 5'-methylthioribose and S-ribosylhomocysteine, respectively. Also cleaves 5'-deoxyadenosine, a toxic by-product of radical S-adenosylmethionine (SAM) enzymes, into 5-deoxyribose and adenine. Thus, is required for in vivo function of the radical SAM enzymes biotin synthase and lipoic acid synthase, that are inhibited by 5'-deoxyadenosine accumulation. The polypeptide is 5'-methylthioadenosine/S-adenosylhomocysteine nucleosidase (Proteus mirabilis (strain HI4320)).